The sequence spans 453 residues: Enolase (453 aa).

Q163 lines the (2R)-2-phosphoglycerate pocket. E205 acts as the Proton donor in catalysis. 3 residues coordinate Mg(2+): D258, E308, and D335. Positions 360, 389, 390, and 411 each coordinate (2R)-2-phosphoglycerate. The active-site Proton acceptor is the K360.

It belongs to the enolase family. Mg(2+) is required as a cofactor.

Its subcellular location is the cytoplasm. The protein resides in the secreted. It localises to the cell surface. It carries out the reaction (2R)-2-phosphoglycerate = phosphoenolpyruvate + H2O. It participates in carbohydrate degradation; glycolysis; pyruvate from D-glyceraldehyde 3-phosphate: step 4/5. Its function is as follows. Catalyzes the reversible conversion of 2-phosphoglycerate (2-PG) into phosphoenolpyruvate (PEP). It is essential for the degradation of carbohydrates via glycolysis. In Mesoplasma florum (strain ATCC 33453 / NBRC 100688 / NCTC 11704 / L1) (Acholeplasma florum), this protein is Enolase.